Reading from the N-terminus, the 288-residue chain is MSTISIHRTETLRITHARSRIFRQRYRRTIPLWKLTINSRSSDTSKKEELSVQISIPPQVDQSRPEGLRFDRLQPPEPEFGHEDRFEFGKFVAREAMLDEEYWTAAWLRAESHWEDRSNERYVDNYKRKFAEQEFNAIKRRCKGMQGQKCSCIVAVKKEEKHIKRSVIKSVVGTLDLSIRYFLQGETFPGEKVKSQLFCSINQEGSNRYGYIANLCVAKSARRQGIACNMLRFAVESARLSGVEQVYVHVHKNNSVAQELYQKTGFKIVETGKFESLDDDTYLLQYTS.

The N-terminal 111 residues, Met-1–Glu-111, are a transit peptide targeting the chloroplast. One can recognise an N-acetyltransferase domain in the interval Ser-151–Ser-288. Residues Leu-215–Val-217, Arg-223–Cys-228, Asn-254–Val-256, and Tyr-261 each bind acetyl-CoA. Tyr-261 (proton donor) is an active-site residue.

It belongs to the acetyltransferase family. GNAT subfamily. In terms of assembly, oligomer. Autoacetylated. In terms of tissue distribution, expressed in green tissues and in roots.

The protein localises to the plastid. It localises to the chloroplast. The protein resides in the cytoplasm. It is found in the perinuclear region. It catalyses the reaction an N-terminal L-alpha-aminoacyl-[protein] + acetyl-CoA = N-terminal N(alpha)-acetyl-L-alpha-aminoacyl-[protein] + CoA + H(+). It carries out the reaction L-lysyl-[protein] + acetyl-CoA = N(6)-acetyl-L-lysyl-[protein] + CoA + H(+). The catalysed reaction is N-terminal L-alanyl-[protein] + acetyl-CoA = N-terminal N(alpha)-acetyl-L-alanyl-[protein] + CoA + H(+). The enzyme catalyses N-terminal L-seryl-[protein] + acetyl-CoA = N-terminal N(alpha)-acetyl-L-seryl-[protein] + CoA + H(+). It catalyses the reaction N-terminal L-threonyl-[protein] + acetyl-CoA = N-terminal N(alpha)-acetyl-L-threonyl-[protein] + CoA + H(+). It carries out the reaction N-terminal L-methionyl-[protein] + acetyl-CoA = N-terminal N(alpha)-acetyl-L-methionyl-[protein] + CoA + H(+). The catalysed reaction is N-terminal L-valyl-[protein] + acetyl-CoA = N-terminal N(alpha)-acetyl-L-valyl-[protein] + CoA + H(+). Protein acetyltransferase with dual specificity triggering both N-alpha-acetylation (NTA), with a large spectrum of modified N-termini, including methionine, alanine, serine, threonine and to a lower extent valine as substrates, and epsilon-lysine acetylation (KA). This chain is GCN5-related N-acetyltransferase 6, chloroplastic, found in Arabidopsis thaliana (Mouse-ear cress).